We begin with the raw amino-acid sequence, 331 residues long: MRPAFAVGLVFAGCCSNVIFLELLARTHPGCGNIVTFAQFLFIAVEGFLFEANLGRKPPAIPIRYYAIMVTMFFTVSVVNNYALNLNIAMPLHMIFRSGSLIANMILGIIILKKRYSMFKYTSIALVSAGIFICTFMSAKQVTVQTGLSDKDGFQAFAWWLLGIAALTFALLMSARMGIFQETLYRQFGKHSKEALFYNHALPLPGFIFLASDIYDHVVLFNKSELYQVPVIGVTMPVMWFYLLMNVVTQYVCIRGVFILTTECTSLTVTLVVTLRKFVSLIFSILYFQNQFTMWHWLGTSFVFIGTLMYTEVWKNLGTTKSELQKDDKKD.

Transmembrane regions (helical) follow at residues 4 to 24, 30 to 50, 59 to 79, 92 to 112, 124 to 144, 153 to 173, 201 to 221, 229 to 249, 251 to 267, 268 to 288, and 294 to 314; these read AFAV…LELL, GCGN…GFLF, PAIP…VSVV, LHMI…IIIL, IALV…QVTV, GFQA…ALLM, ALPL…VVLF, VPVI…NVVT, YVCI…CTSL, TVTL…ILYF, and MWHW…TEVW. A Mediates endoplasmic reticulum retention motif is present at residues 326-331; that stretch reads KDDKKD.

It belongs to the nucleotide-sugar transporter family. SLC35B subfamily.

It is found in the endoplasmic reticulum membrane. It carries out the reaction UDP-N-acetyl-alpha-D-glucosamine(in) + UDP-alpha-D-glucuronate(out) = UDP-N-acetyl-alpha-D-glucosamine(out) + UDP-alpha-D-glucuronate(in). It catalyses the reaction UDP-alpha-D-xylose(in) + UDP-alpha-D-glucuronate(out) = UDP-alpha-D-xylose(out) + UDP-alpha-D-glucuronate(in). Antiporter that transports nucleotide sugars across the endoplasmic reticulum (ER) membrane in exchange for another nucleotide sugar. May couple UDP-alpha-D-glucuronate (UDP-GlcA) or UDP-alpha-D-xylose (UDP-Xyl) efflux to UDP-alpha-D-glucuronate (UDP-GlcA) influx into the ER lumen, which in turn stimulates glucuronidation and excretion of endobiotics and xenobiotics. This is Nucleotide sugar transporter SLC35B4 (Slc35b4) from Mus musculus (Mouse).